Reading from the N-terminus, the 180-residue chain is Ribulose bisphosphate carboxylase small subunit, chloroplastic 1 (180 aa).

The transit peptide at 1–56 directs the protein to the chloroplast; it reads MASSVISSAAVATRTNVAQASMVAPFNGLKSAVSFPVSSKQNLDITSIASNGGRVQ.

Belongs to the RuBisCO small chain family. As to quaternary structure, heterohexadecamer of 8 large and 8 small subunits.

Its subcellular location is the plastid. It localises to the chloroplast. In terms of biological role, ruBisCO catalyzes two reactions: the carboxylation of D-ribulose 1,5-bisphosphate, the primary event in carbon dioxide fixation, as well as the oxidative fragmentation of the pentose substrate. Both reactions occur simultaneously and in competition at the same active site. Although the small subunit is not catalytic it is essential for maximal activity. This chain is Ribulose bisphosphate carboxylase small subunit, chloroplastic 1, found in Petunia hybrida (Petunia).